The primary structure comprises 81 residues: Acyl carrier protein (81 aa).

The Carrier domain maps to 3–78 (QEIFDKIKNI…EAVNIIAEKT (76 aa)). The residue at position 38 (S38) is an O-(pantetheine 4'-phosphoryl)serine.

Belongs to the acyl carrier protein (ACP) family. 4'-phosphopantetheine is transferred from CoA to a specific serine of apo-ACP by AcpS. This modification is essential for activity because fatty acids are bound in thioester linkage to the sulfhydryl of the prosthetic group.

Its subcellular location is the cytoplasm. The protein operates within lipid metabolism; fatty acid biosynthesis. Carrier of the growing fatty acid chain in fatty acid biosynthesis. The sequence is that of Acyl carrier protein from Picosynechococcus sp. (strain ATCC 27264 / PCC 7002 / PR-6) (Agmenellum quadruplicatum).